Here is a 231-residue protein sequence, read N- to C-terminus: Ribonuclease HI (231 aa).

Positions 1 to 146 constitute an RNase H type-1 domain; the sequence is MRERAVAACD…ADRAASQAAV (146 aa). Positions 10, 50, 72, and 138 each coordinate Mg(2+). Low complexity-rich tracts occupy residues 148–157 and 166–181; these read QEAAGSALGS and VPAA…SGAA. 2 disordered regions span residues 148–192 and 212–231; these read QEAA…SART and PIAK…VAAG.

This sequence belongs to the RNase H family. As to quaternary structure, monomer. It depends on Mg(2+) as a cofactor.

It localises to the cytoplasm. It carries out the reaction Endonucleolytic cleavage to 5'-phosphomonoester.. Functionally, endonuclease that specifically degrades the RNA of RNA-DNA hybrids. This is Ribonuclease HI (rnhA) from Streptomyces coelicolor (strain ATCC BAA-471 / A3(2) / M145).